The following is a 494-amino-acid chain: Inosine-5'-monophosphate dehydrogenase (494 aa).

CBS domains are found at residues 93-154 (IIRN…NEKI) and 158-217 (MTTD…CKDM). NAD(+) is bound by residues aspartate 251 and 301-303 (GIG). K(+) is bound by residues glycine 303 and glycine 305. Serine 306 lines the IMP pocket. Cysteine 308 contributes to the K(+) binding site. Cysteine 308 (thioimidate intermediate) is an active-site residue. Residues 341-343 (DGG), 364-365 (GS), and 388-392 (YRGMG) contribute to the IMP site. The active-site Proton acceptor is arginine 406. Residue glutamate 421 participates in IMP binding. The K(+) site is built by glutamate 475, serine 476, and histidine 477.

Belongs to the IMPDH/GMPR family. Homotetramer. K(+) serves as cofactor.

The enzyme catalyses IMP + NAD(+) + H2O = XMP + NADH + H(+). It functions in the pathway purine metabolism; XMP biosynthesis via de novo pathway; XMP from IMP: step 1/1. Mycophenolic acid (MPA) is a non-competitive inhibitor that prevents formation of the closed enzyme conformation by binding to the same site as the amobile flap. In contrast, mizoribine monophosphate (MZP) is a competitive inhibitor that induces the closed conformation. MPA is a potent inhibitor of mammalian IMPDHs but a poor inhibitor of the bacterial enzymes. MZP is a more potent inhibitor of bacterial IMPDH. Functionally, catalyzes the conversion of inosine 5'-phosphate (IMP) to xanthosine 5'-phosphate (XMP), the first committed and rate-limiting step in the de novo synthesis of guanine nucleotides, and therefore plays an important role in the regulation of cell growth. The chain is Inosine-5'-monophosphate dehydrogenase from Chlorobaculum parvum (strain DSM 263 / NCIMB 8327) (Chlorobium vibrioforme subsp. thiosulfatophilum).